A 505-amino-acid polypeptide reads, in one-letter code: Betaine aldehyde dehydrogenase (505 aa).

239–244 (GSTATG) serves as a coordination point for NAD(+). The active-site Proton acceptor is E261. C296 acts as the Nucleophile in catalysis. Positions 503-505 (SKL) match the Microbody targeting signal motif.

The protein belongs to the aldehyde dehydrogenase family. As to quaternary structure, homodimer.

The protein resides in the peroxisome. The enzyme catalyses betaine aldehyde + NAD(+) + H2O = glycine betaine + NADH + 2 H(+). It participates in amine and polyamine biosynthesis; betaine biosynthesis via choline pathway; betaine from betaine aldehyde: step 1/1. This chain is Betaine aldehyde dehydrogenase, found in Hordeum vulgare (Barley).